The following is a 397-amino-acid chain: Myb family transcription factor PHL4 (397 aa).

Positions 1-27 are disordered; it reads MIPNDDDDANSMKNYPLNDDDANSMKN. The region spanning 228–288 is the HTH myb-type domain; it reads AAAKGRMRWT…HLQKYRTAKY (61 aa). A DNA-binding region (H-T-H motif) is located at residues 259-284; sequence PKGVLKHMKVEGLTIFHVKSHLQKYR. Residues 319–339 are coiled coil; that stretch reads TETLRIQMEHQKKLHEQLESL. Residues 332–337 carry the LHEQLE motif; sequence LHEQLE. Residues 359-397 are disordered; the sequence is KQNMGFGGPEQGEKTSAKTPENGSEESESPRPKRPRNEE. Basic and acidic residues predominate over residues 386–397; the sequence is ESPRPKRPRNEE. Residue Ser-387 is modified to Phosphoserine.

The protein belongs to the MYB-CC family.

Its subcellular location is the nucleus. Functionally, transcription factor involved in male gametophyte development. The chain is Myb family transcription factor PHL4 from Arabidopsis thaliana (Mouse-ear cress).